The following is a 408-amino-acid chain: Phosphoenolpyruvate/phosphate translocator 1, chloroplastic (408 aa).

The N-terminal 85 residues, 1 to 85, are a transit peptide targeting the chloroplast; sequence MQSSAVFSLS…SLDTNRFRTA (85 aa). At Ala-86 the chain carries N-acetylalanine. 8 consecutive transmembrane segments (helical) span residues 105–125, 137–157, 165–185, 198–218, 222–242, 283–303, 324–346, and 377–396; these read VLELGLLFAMWYLFNIYFNIY, MTVTLVQFAVGSVLITIMWVL, ISGAQLAAILPLAVVHTLGNL, FTHTIKAMEPFFSVLLSAMFL, PTPWVLGAIVPIVGGVALASI, ITLFSIITLMSLVLMAPVTFF, IYTKSLIAALCFHAYQQVSYMIL, and VSPVNAFGTGIALAGVFLYS. Positions 124 to 241 constitute an EamA domain; that stretch reads IYNKQVLKAL…PIVGGVALAS (118 aa).

The protein belongs to the TPT transporter family. PPT (TC 2.A.7.9) subfamily. In terms of tissue distribution, expressed in root columella, lateral root cap and root vasculature tissue. In leaves, highly expressed in xylem parenchyma cells. In flowers, expressed in sepals, petals, filaments of the stamens, anthers and stigma.

Its subcellular location is the plastid. It is found in the chloroplast membrane. Its function is as follows. Phosphoenolpyruvate/phosphate translocator that transports phosphoenolpyruvate (PEP), 2-phosphoglycerate, 3-phosphoglycerate and dihydroxyacetone phosphate. Imports PEP to the chloroplast stroma as one substrate of the shikimate pathway, from which aromatic amino acids and a variety of secondary products derive. Required for correct leaf mesophyll cell development and expression of chlorophyll a/b binding protein 3 (CAB3). This chain is Phosphoenolpyruvate/phosphate translocator 1, chloroplastic (PPT1), found in Arabidopsis thaliana (Mouse-ear cress).